The following is a 366-amino-acid chain: Ribosomal RNA large subunit methyltransferase M (366 aa).

S-adenosyl-L-methionine-binding positions include S188, 221-224, D240, D260, and D277; that span reads CPGG. K306 functions as the Proton acceptor in the catalytic mechanism.

Belongs to the class I-like SAM-binding methyltransferase superfamily. RNA methyltransferase RlmE family. RlmM subfamily. In terms of assembly, monomer.

It is found in the cytoplasm. The enzyme catalyses cytidine(2498) in 23S rRNA + S-adenosyl-L-methionine = 2'-O-methylcytidine(2498) in 23S rRNA + S-adenosyl-L-homocysteine + H(+). Its function is as follows. Catalyzes the 2'-O-methylation at nucleotide C2498 in 23S rRNA. This is Ribosomal RNA large subunit methyltransferase M from Salmonella gallinarum (strain 287/91 / NCTC 13346).